Reading from the N-terminus, the 287-residue chain is O-ureido-serine racemase (287 aa).

Asn-20 contacts substrate. Cys-81 serves as the catalytic Proton donor. Substrate contacts are provided by residues 82–83 (GN), Asn-167, Asn-200, and 218–219 (EY). The active-site Proton acceptor is the Cys-227. 228-229 (GS) serves as a coordination point for substrate.

It belongs to the diaminopimelate epimerase family. As to quaternary structure, monomer.

The protein localises to the cytoplasm. It carries out the reaction O-ureido-L-serine = O-ureido-D-serine. Its activity is regulated as follows. Inhibited by thiol-inactivating reagents such as iodoacetamide and Hg(2+) ions. Functionally, involved in the biosynthesis of the antibiotic D-cycloserine (DCS), a cyclic structural analog of D-alanine, used as an antitubercular agent. Catalyzes the stereoinversion of O-ureido-L-serine to O-ureido-D-serine. This is O-ureido-serine racemase from Streptomyces lavendulae.